A 184-amino-acid polypeptide reads, in one-letter code: ATP synthase subunit b, chloroplastic (184 aa).

Residues 27–49 (LATNPINLSVVLGVLIFFGKGVL) form a helical membrane-spanning segment.

This sequence belongs to the ATPase B chain family. F-type ATPases have 2 components, F(1) - the catalytic core - and F(0) - the membrane proton channel. F(1) has five subunits: alpha(3), beta(3), gamma(1), delta(1), epsilon(1). F(0) has four main subunits: a(1), b(1), b'(1) and c(10-14). The alpha and beta chains form an alternating ring which encloses part of the gamma chain. F(1) is attached to F(0) by a central stalk formed by the gamma and epsilon chains, while a peripheral stalk is formed by the delta, b and b' chains.

Its subcellular location is the plastid. It localises to the chloroplast thylakoid membrane. Functionally, f(1)F(0) ATP synthase produces ATP from ADP in the presence of a proton or sodium gradient. F-type ATPases consist of two structural domains, F(1) containing the extramembraneous catalytic core and F(0) containing the membrane proton channel, linked together by a central stalk and a peripheral stalk. During catalysis, ATP synthesis in the catalytic domain of F(1) is coupled via a rotary mechanism of the central stalk subunits to proton translocation. Its function is as follows. Component of the F(0) channel, it forms part of the peripheral stalk, linking F(1) to F(0). The sequence is that of ATP synthase subunit b, chloroplastic from Nicotiana sylvestris (Wood tobacco).